Reading from the N-terminus, the 34-residue chain is Histone H1, sperm (34 aa).

The tract at residues 1–34 (PASPQKRAASPRRSPKKSPRKSPKKSPRKRSASP) is disordered. Basic residues predominate over residues 9-34 (ASPRRSPKKSPRKSPKKSPRKRSASP).

It belongs to the histone H1/H5 family. In terms of tissue distribution, sperm.

It localises to the nucleus. The protein resides in the chromosome. Its function is as follows. Histones H1 are necessary for the condensation of nucleosome chains into higher-order structures. In Strongylocentrotus purpuratus (Purple sea urchin), this protein is Histone H1, sperm.